Reading from the N-terminus, the 387-residue chain is MNSSNTGAPEAAQAATLEAFDRRAAEQYLRGQWIAEEHLMRAIGGPRPAGIPYRWEWKSVEVALDEATIALGPVDTARRHLTFVNPGLMDRGSATTHTISAGFQLVKPGEVCWSHRHTMSAVRFVTKGHPDAFTAVDGERLPMEDFDLLITPRFSWHDHHNSGDADVVWLDGLDIGLLQSLGAVFYEPYGDDSQNVRPSSSEGIGTRSHWLRPTWERGRESRLPIRYPWKEVNARLDVYDLDAGTPYDGLALRYANPVTGGPTMATMDCWVQRLAPGFDGKSHRRSSSAITYVISGSGTMVTEDETITFNRGDVISLPNWTNFRWTNDSEIEPVLLFSMHDIPALEAFGLLYEEPEAILNATPAPINPTPSLNPIYRPGAFYDQDEL.

Cupin type-2 domains lie at 103 to 171 (FQLV…VWLD) and 271 to 337 (VQRL…VLLF).

Homohexamer. Fe(2+) is required as a cofactor.

The catalysed reaction is 1-hydroxy-2-naphthoate + O2 = (3Z)-4-(2-carboxyphenyl)-2-oxobut-3-enoate + H(+). Dioxygenase involved in phenanthrene catabolism by mediating cleavage of 1-hydroxy-2-naphthoate. The chain is 1-hydroxy-2-naphthoate 1,2-dioxygenasee (phdI) from Nocardioides sp. (strain KP7).